We begin with the raw amino-acid sequence, 863 residues long: Potassium/sodium hyperpolarization-activated cyclic nucleotide-gated channel 2 (863 aa).

The span at 1 to 10 (MDARGGGGRP) shows a compositional bias: gly residues. The disordered stretch occupies residues 1–131 (MDARGGGGRP…AGPAGEPRGS (131 aa)). Topologically, residues 1-188 (MDARGGGGRP…PYSDFRFYWD (188 aa)) are cytoplasmic. Positions 17–47 (TPAPGPPPPPPPPAPPQPQPPPAPPPNPTTP) are enriched in pro residues. The segment covering 106 to 128 (GAASGPSAAEEAGSEEAGPAGEP) has biased composition (low complexity). 2 positions are modified to phosphoserine: Ser119 and Ser134. Positions 131 to 182 (SQASFLQRQFGALLQPGVNKFSLRMFGSQKAVEREQERVKSAGAWIIHPYSD) are involved in subunit assembly. A helical membrane pass occupies residues 189 to 209 (FTMLLFMVGNLIIIPVGITFF). The Extracellular segment spans residues 210–213 (KDET). Residues 214 to 234 (TAPWIVFNVVSDTFFLMDLVL) traverse the membrane as a helical segment. The Cytoplasmic portion of the chain corresponds to 235-261 (NFRTGIVIEDNTEIILDPEKIKKKYLR). Residues 262–282 (TWFVVDFVSSIPVDYIFLIVE) traverse the membrane as a helical segment. The Extracellular portion of the chain corresponds to 283–290 (KGIDSEVY). A helical; Voltage-sensor membrane pass occupies residues 291-311 (KTARALRIVRFTKILSLLRLL). The Cytoplasmic portion of the chain corresponds to 312 to 342 (RLSRLIRYIHQWEEIFHMTYDLASAVMRICN). Residues 343–363 (LISMMLLLCHWDGCLQFLVPM) traverse the membrane as a helical segment. Residues 364-386 (LQDFPSDCWVSINNMVNHSWSEL) lie on the Extracellular side of the membrane. A glycan (N-linked (GlcNAc...) asparagine) is linked at Asn380. An intramembrane region (pore-forming) is located at residues 387–408 (YSFALFKAMSHMLCIGYGRQAP). Residues 409–413 (ESMTD) are Extracellular-facing. Residues 414 to 434 (IWLTMLSMIVGATCYAMFIGH) traverse the membrane as a helical segment. Residues 435–863 (ATALIQSLDS…SARSRLSSNL (429 aa)) are Cytoplasmic-facing. 3',5'-cyclic AMP is bound by residues Gly581, Glu582, Cys584, Arg591, Thr592, and Arg632. Phosphoserine; by PKG/PRKG2 is present on Ser641. Phosphoserine is present on Ser726. Residue Arg728 is modified to Omega-N-methylarginine. A disordered region spans residues 730–863 (VRRAPPGPLP…SARSRLSSNL (134 aa)). Residues 734 to 755 (PPGPLPPAASPGPPAASPPAAP) show a composition bias toward pro residues. 3 positions are modified to phosphoserine: Ser743, Ser750, and Ser757. Low complexity-rich tracts occupy residues 756-765 (SSPRAPRTSP), 778-800 (PALPARRLSRASRPLSASQPSLP), and 808-834 (PAASARPASSSTPRLGPAPTARTAAPS). A phosphoserine mark is found at Ser840, Ser842, and Ser847.

Belongs to the potassium channel HCN family. In terms of assembly, homotetramer. The channel is composed of a homo- or heterotetrameric complex of pore-forming subunits. Heterotetramer with HCN1. Forms an obligate 4:4 complex with accessory subunit PEX5L; regulates HCN2 cell-surface expression and cyclic nucleotide dependence. Interacts with KCNE2. Post-translationally, S-palmitoylated. N-glycosylated; required for cell surface trafficking of HCN2. In terms of processing, phosphorylation at Ser-641 by PRKG2 shifts the voltage-dependence to more negative voltages, hence counteracting the stimulatory effect of cGMP on gating. In terms of tissue distribution, highly expressed in brain. Detected at low levels in heart, in ventricle, atrium and in sinoatrial node (SAN).

Its subcellular location is the cell membrane. It catalyses the reaction Na(+)(in) = Na(+)(out). The catalysed reaction is K(+)(in) = K(+)(out). It carries out the reaction NH4(+)(in) = NH4(+)(out). Activated by cAMP, and at 10-100 times higher concentrations, also by cGMP. cAMP binding causes a conformation change that leads to the assembly of an active tetramer and channel opening. In the absence of cAMP, the C-terminal region is thought to exert a tonic inhibition on the pore when HCN2 is in a non-tetrameric form. Channel activity is modulated by intracellular chloride ions and pH; acidic pH shifts the activation to more negative voltages. Phosphatidylinositol-4,5- bisphosphate (PIP(2)) acts as a ligand that allosterically opens HCN2 by shifting voltage-dependent channel activation toward depolarized potentials. Inhibited by extracellular cesium ions. Hyperpolarization-activated ion channel exhibiting weak selectivity for potassium over sodium ions. Contributes to the native pacemaker currents in heart (If) and in neurons (Ih). Can also transport ammonium in the distal nephron. Involved in the initiation of neuropathic pain in sensory neurons. This is Potassium/sodium hyperpolarization-activated cyclic nucleotide-gated channel 2 from Mus musculus (Mouse).